Here is an 809-residue protein sequence, read N- to C-terminus: Protein TRC8 homolog (809 aa).

11 helical membrane passes run 124–144 (TVKFVLCVFAFLSAACIFMLW), 147–167 (HLVMVYMFLTSLGLTFLSYWS), 200–220 (VMSLAPHLMAQWFMGMLFAYI), 233–253 (MPIIFASPILLAMLPLPAKVV), 256–276 (LPVVAVFTPIILTKITLMQSA), 350–370 (LVDGCETMTAVLGMTGVISMF), 392–412 (LGTVSAVLFYILALQTGLTSL), 425–445 (LCLLMTALLHFLHNIVSPILM), 461–481 (ALSVCAFLVVLSVSLLYHLWS), 488–508 (WLLAVTAFSVEVVVKVLVSLA), and 539–559 (SVEFCFGILLFINGAWILIFE). Residues 621 to 659 (CAICYQEMYSAKITRCRHFFHGVCLRKWLYVQDRCPLCH) form an RING-type; atypical zinc finger. 2 disordered regions span residues 696-724 (NNAAAQRRSPERAPVEASEQAPATSSSSA) and 752-788 (VASSSSATHRISASGSSDSSYMTASAQSPPPTATSAA). Positions 711–724 (EASEQAPATSSSSA) are enriched in low complexity.

In terms of assembly, interacts with VHL. Interacts with the MPN domain of CSN5. Interacts with EIF3F and EIF3H.

It is found in the endoplasmic reticulum membrane. Functionally, plays a role in growth inhibition that is dependent upon COP9 signalosome subunits CSN5 and CSN6. May modulate signalosome levels or compartmentalization. Probably functions in the same or a related pathway to VHL during early midline development. In Drosophila melanogaster (Fruit fly), this protein is Protein TRC8 homolog.